The primary structure comprises 678 residues: Zinc finger translocation-associated protein (678 aa).

Disordered regions lie at residues 1–100, 174–250, 333–413, and 493–583; these read MEPG…PGRD, GAGG…GSRG, LSEL…RDHR, and PESP…NYQP. Over residues 66-78 the composition is skewed to low complexity; sequence PSSRARGPASSGR. A compositionally biased stretch (basic and acidic residues) spans 79 to 88; that stretch reads KYSDHCEARA. Residues 187–200 are compositionally biased toward acidic residues; sequence AEEEEEEDEEEEEG. The segment covering 205 to 214 has biased composition (low complexity); the sequence is ACPPKGSGKA. Lys375 is covalently cross-linked (Glycyl lysine isopeptide (Lys-Gly) (interchain with G-Cter in SUMO2)). Residues 493-509 are compositionally biased toward low complexity; it reads PESPSVPVAPSTASASE. 2 stretches are compositionally biased toward acidic residues: residues 512–524 and 539–549; these read GGAE…EEWW and AEEEDDEDDSQ. Over residues 557-572 the composition is skewed to pro residues; the sequence is PPLPLPPPPPPPPPPP. Residues 573 to 583 are compositionally biased toward basic and acidic residues; that stretch reads RSREQRRNYQP.

This is Zinc finger translocation-associated protein from Mus musculus (Mouse).